The chain runs to 185 residues: Elongation factor P (185 aa).

Belongs to the elongation factor P family.

The protein resides in the cytoplasm. It participates in protein biosynthesis; polypeptide chain elongation. Its function is as follows. Involved in peptide bond synthesis. Stimulates efficient translation and peptide-bond synthesis on native or reconstituted 70S ribosomes in vitro. Probably functions indirectly by altering the affinity of the ribosome for aminoacyl-tRNA, thus increasing their reactivity as acceptors for peptidyl transferase. The polypeptide is Elongation factor P (Carboxydothermus hydrogenoformans (strain ATCC BAA-161 / DSM 6008 / Z-2901)).